The sequence spans 387 residues: Eukaryotic translation initiation factor 3 subunit M (387 aa).

In terms of domain architecture, PCI spans 181–340; it reads LSSKVMIELL…RKVHISSTMH (160 aa).

This sequence belongs to the eIF-3 subunit M family. In terms of assembly, component of the eukaryotic translation initiation factor 3 (eIF-3) complex. The eIF-3 complex interacts with pix.

The protein resides in the cytoplasm. It is found in the golgi apparatus. Its function is as follows. Component of the eukaryotic translation initiation factor 3 (eIF-3) complex, which is involved in protein synthesis of a specialized repertoire of mRNAs and, together with other initiation factors, stimulates binding of mRNA and methionyl-tRNAi to the 40S ribosome. The eIF-3 complex specifically targets and initiates translation of a subset of mRNAs involved in cell proliferation. This Drosophila mojavensis (Fruit fly) protein is Eukaryotic translation initiation factor 3 subunit M.